The chain runs to 458 residues: UDP-N-acetylmuramate--L-alanine ligase (458 aa).

An ATP-binding site is contributed by 115–121 (GSHGKTT).

The protein belongs to the MurCDEF family.

Its subcellular location is the cytoplasm. It catalyses the reaction UDP-N-acetyl-alpha-D-muramate + L-alanine + ATP = UDP-N-acetyl-alpha-D-muramoyl-L-alanine + ADP + phosphate + H(+). It participates in cell wall biogenesis; peptidoglycan biosynthesis. Functionally, cell wall formation. This is UDP-N-acetylmuramate--L-alanine ligase from Anaeromyxobacter sp. (strain Fw109-5).